A 447-amino-acid polypeptide reads, in one-letter code: MGEDTDTRKINHSFLRDHSYVTEADIISTVEFNHTGELLATGDKGGRVVIFQREPESKNAPHSQGEYDVYSTFQSHEPEFDYLKSLEIEEKINKIKWLPQQNAAHSLLSTNDKTIKLWKITERDKRPEGYNLKDEEGKLKDLSTVTSLQVPVLKPMDLMVEVSPRRIFANGHTYHINSISVNSDCETYMSADDLRINLWHLAITDRSFNIVDIKPANMEDLTEVITASEFHPHHCNLFVYSSSKGSLRLCDMRAAALCDKHSKLFEEPEDPSNRSFFSEIISSVSDVKFSHSGRYMLTRDYLTVKVWDLNMEARPIETYQVHDYLRSKLCSLYENDCIFDKFECAWNGSDSVIMTGAYNNFFRMFDRNTKRDVTLEASRESSKPRAVLKPRRVCVGGKRRRDDISVDSLDFTKKILHTAWHPAENIIAIAATNNLYIFQDKVNSDMH.

7 WD repeats span residues 22–61 (TEAD…KNAP), 87–128 (EIEE…KRPE), 171–209 (GHTY…RSFN), 220–260 (DLTE…LCDK), 279–317 (EIIS…RPIE), 334–375 (ENDC…DVTL), and 410–446 (DFTK…NSDM).

The protein belongs to the phosphatase 2A regulatory subunit B family. As to quaternary structure, PP2A consists of a common heterodimeric core enzyme, composed of a 36 kDa catalytic subunit (subunit C) and a 65 kDa constant regulatory subunit (PR65 or subunit A), that associates with a variety of regulatory subunits. Proteins that associate with the core dimer include three families of regulatory subunits B (the R2/B/PR55/B55, R3/B''/PR72/PR130/PR59 and R5/B'/B56 families), the 48 kDa variable regulatory subunit, viral proteins, and cell signaling molecules. Interacts with IER5.

In terms of biological role, the B regulatory subunit might modulate substrate selectivity and catalytic activity, and might also direct the localization of the catalytic enzyme to a particular subcellular compartment. This is Serine/threonine-protein phosphatase 2A 55 kDa regulatory subunit B gamma isoform (PPP2R2C) from Homo sapiens (Human).